A 186-amino-acid polypeptide reads, in one-letter code: Large ribosomal subunit protein uL5 (186 aa).

This sequence belongs to the universal ribosomal protein uL5 family. As to quaternary structure, part of the 50S ribosomal subunit; part of the 5S rRNA/L5/L18/L25 subcomplex. Contacts the 5S rRNA and the P site tRNA. Forms a bridge to the 30S subunit in the 70S ribosome.

This is one of the proteins that bind and probably mediate the attachment of the 5S RNA into the large ribosomal subunit, where it forms part of the central protuberance. In the 70S ribosome it contacts protein S13 of the 30S subunit (bridge B1b), connecting the 2 subunits; this bridge is implicated in subunit movement. Contacts the P site tRNA; the 5S rRNA and some of its associated proteins might help stabilize positioning of ribosome-bound tRNAs. The sequence is that of Large ribosomal subunit protein uL5 from Maricaulis maris (strain MCS10) (Caulobacter maris).